Reading from the N-terminus, the 140-residue chain is Nucleoside diphosphate kinase (140 aa).

ATP contacts are provided by Lys11, Phe59, Arg87, Thr93, Arg104, and Asn114. His117 serves as the catalytic Pros-phosphohistidine intermediate.

Belongs to the NDK family. In terms of assembly, homotetramer. Mg(2+) is required as a cofactor.

The protein localises to the cytoplasm. The enzyme catalyses a 2'-deoxyribonucleoside 5'-diphosphate + ATP = a 2'-deoxyribonucleoside 5'-triphosphate + ADP. It carries out the reaction a ribonucleoside 5'-diphosphate + ATP = a ribonucleoside 5'-triphosphate + ADP. Its function is as follows. Major role in the synthesis of nucleoside triphosphates other than ATP. The ATP gamma phosphate is transferred to the NDP beta phosphate via a ping-pong mechanism, using a phosphorylated active-site intermediate. This chain is Nucleoside diphosphate kinase, found in Gluconobacter oxydans (strain 621H) (Gluconobacter suboxydans).